The following is a 906-amino-acid chain: Probable dipeptidyl-aminopeptidase B (906 aa).

The segment covering 1 to 11 (MRSSEDREDSE) has biased composition (acidic residues). The interval 1–33 (MRSSEDREDSELLPANRPRSPSRSSYDSDDSGL) is disordered. The Cytoplasmic portion of the chain corresponds to 1–85 (MRSSEDREDS…TKASSSRSRR (85 aa)). The span at 21 to 33 (PSRSSYDSDDSGL) shows a compositional bias: low complexity. The chain crosses the membrane as a helical; Signal-anchor for type II membrane protein span at residues 86 to 106 (LLWLVVLLCCGGWVVAFVLFI). The Vacuolar segment spans residues 107 to 906 (TQGRADYRTA…AKRVWPGFAH (800 aa)). Asn338 and Asn629 each carry an N-linked (GlcNAc...) asparagine glycan. Residue Ser743 is the Charge relay system of the active site. Asn797 carries an N-linked (GlcNAc...) asparagine glycan. Residues Asp820 and His853 each act as charge relay system in the active site.

It belongs to the peptidase S9B family.

It localises to the vacuole membrane. It carries out the reaction Release of an N-terminal dipeptide, Xaa-Yaa-|-Zaa-, from a polypeptide, preferentially when Yaa is Pro, provided Zaa is neither Pro nor hydroxyproline.. In terms of biological role, type IV dipeptidyl-peptidase which removes N-terminal dipeptides sequentially from polypeptides having unsubstituted N-termini provided that the penultimate residue is proline. The protein is Probable dipeptidyl-aminopeptidase B (dapB) of Emericella nidulans (strain FGSC A4 / ATCC 38163 / CBS 112.46 / NRRL 194 / M139) (Aspergillus nidulans).